The sequence spans 247 residues: MNLLITNDDGISSAGIKALERVLGKSYNTYLIAPLKERSVTSMALTVFQGMRVERINDNHYIADGFPVDCVNIGLYAEIFPKIDFVISGINRGVNMGYDVHYSGTVGAAKHGALHGIPSLAVSSGRIDPEDGYEKEAELVLAFLEQYKSQIQSGEIWNLNFPPEVSGTGTISELVFTRLGRRRYSEKYEKKQIIEGVSEFQLNGSLLGHDEETGTDFEAYAQGKIPLTPIQLDLTEKNRLKELLTNR.

4 residues coordinate a divalent metal cation: aspartate 8, aspartate 9, serine 39, and asparagine 91.

This sequence belongs to the SurE nucleotidase family. A divalent metal cation is required as a cofactor.

It localises to the cytoplasm. It carries out the reaction a ribonucleoside 5'-phosphate + H2O = a ribonucleoside + phosphate. In terms of biological role, nucleotidase that shows phosphatase activity on nucleoside 5'-monophosphates. In Leptospira biflexa serovar Patoc (strain Patoc 1 / Ames), this protein is 5'-nucleotidase SurE.